Here is a 267-residue protein sequence, read N- to C-terminus: Tryptophan synthase alpha chain (267 aa).

Catalysis depends on proton acceptor residues Glu49 and Asp60.

It belongs to the TrpA family. As to quaternary structure, tetramer of two alpha and two beta chains.

It catalyses the reaction (1S,2R)-1-C-(indol-3-yl)glycerol 3-phosphate + L-serine = D-glyceraldehyde 3-phosphate + L-tryptophan + H2O. The protein operates within amino-acid biosynthesis; L-tryptophan biosynthesis; L-tryptophan from chorismate: step 5/5. Its function is as follows. The alpha subunit is responsible for the aldol cleavage of indoleglycerol phosphate to indole and glyceraldehyde 3-phosphate. This is Tryptophan synthase alpha chain from Geotalea uraniireducens (strain Rf4) (Geobacter uraniireducens).